The following is a 100-amino-acid chain: Urease subunit gamma 1 (100 aa).

It belongs to the urease gamma subunit family. In terms of assembly, heterotrimer of UreA (gamma), UreB (beta) and UreC (alpha) subunits. Three heterotrimers associate to form the active enzyme.

It localises to the cytoplasm. The enzyme catalyses urea + 2 H2O + H(+) = hydrogencarbonate + 2 NH4(+). It functions in the pathway nitrogen metabolism; urea degradation; CO(2) and NH(3) from urea (urease route): step 1/1. In terms of biological role, disruption of the ure1 gene cluster suggests that it protects brucellae during their passage through the stomach. The major route of infection in human brucellosis is oral. This is Urease subunit gamma 1 from Brucella abortus (strain 2308).